The chain runs to 74 residues: Anaphase-promoting complex subunit 13 (74 aa).

The protein belongs to the APC13 family. The APC/C is composed of at least 12 subunits.

Its subcellular location is the nucleus. The protein operates within protein modification; protein ubiquitination. Its function is as follows. Component of the anaphase promoting complex/cyclosome (APC/C), a cell cycle-regulated E3 ubiquitin ligase that controls progression through mitosis and the G1 phase of the cell cycle. The APC/C complex acts by mediating ubiquitination and subsequent degradation of target proteins: it mainly mediates the formation of 'Lys-11'-linked polyubiquitin chains and, to a lower extent, the formation of 'Lys-48'- and 'Lys-63'-linked polyubiquitin chains. The APC/C complex catalyzes assembly of branched 'Lys-11'-/'Lys-48'-linked branched ubiquitin chains on target proteins. This Xenopus tropicalis (Western clawed frog) protein is Anaphase-promoting complex subunit 13 (anapc13).